The chain runs to 201 residues: tRNA (guanine-N(7)-)-methyltransferase (201 aa).

S-adenosyl-L-methionine contacts are provided by Glu34, Glu59, Asp86, and Asp107. Asp107 is a catalytic residue. Residues Lys111, Asp143, and Thr181–Glu184 each bind substrate.

The protein belongs to the class I-like SAM-binding methyltransferase superfamily. TrmB family.

The catalysed reaction is guanosine(46) in tRNA + S-adenosyl-L-methionine = N(7)-methylguanosine(46) in tRNA + S-adenosyl-L-homocysteine. It functions in the pathway tRNA modification; N(7)-methylguanine-tRNA biosynthesis. Its function is as follows. Catalyzes the formation of N(7)-methylguanine at position 46 (m7G46) in tRNA. This Mycoplasma mobile (strain ATCC 43663 / 163K / NCTC 11711) (Mesomycoplasma mobile) protein is tRNA (guanine-N(7)-)-methyltransferase.